The chain runs to 196 residues: ATP-dependent Clp protease proteolytic subunit (196 aa).

Residue serine 101 is the Nucleophile of the active site. Histidine 126 is an active-site residue.

Belongs to the peptidase S14 family. In terms of assembly, component of the chloroplastic Clp protease core complex.

Its subcellular location is the plastid. The protein resides in the chloroplast stroma. It catalyses the reaction Hydrolysis of proteins to small peptides in the presence of ATP and magnesium. alpha-casein is the usual test substrate. In the absence of ATP, only oligopeptides shorter than five residues are hydrolyzed (such as succinyl-Leu-Tyr-|-NHMec, and Leu-Tyr-Leu-|-Tyr-Trp, in which cleavage of the -Tyr-|-Leu- and -Tyr-|-Trp bonds also occurs).. Its function is as follows. Cleaves peptides in various proteins in a process that requires ATP hydrolysis. Has a chymotrypsin-like activity. Plays a major role in the degradation of misfolded proteins. The chain is ATP-dependent Clp protease proteolytic subunit from Spinacia oleracea (Spinach).